A 447-amino-acid chain; its full sequence is Exodeoxyribonuclease 7 large subunit (447 aa).

Belongs to the XseA family. Heterooligomer composed of large and small subunits.

The protein localises to the cytoplasm. The enzyme catalyses Exonucleolytic cleavage in either 5'- to 3'- or 3'- to 5'-direction to yield nucleoside 5'-phosphates.. Functionally, bidirectionally degrades single-stranded DNA into large acid-insoluble oligonucleotides, which are then degraded further into small acid-soluble oligonucleotides. This Lactiplantibacillus plantarum (strain ATCC BAA-793 / NCIMB 8826 / WCFS1) (Lactobacillus plantarum) protein is Exodeoxyribonuclease 7 large subunit.